The chain runs to 723 residues: METAMCVCCPCCTWQRCCPQLCSCLCCKFIFTSERNCTCFPCPYKDERNCQFCHCTCSESPNCHWCCCSWANDPNCKCCCTASSNLNCYYYESRCCRNTIITFHKGRLRSIHTSSKTALRTGSSDTQVDEVKSIPANSHLVNHLNCPMCSRLRLHSFMLPCNHSLCEKCLRQLQKHAEVTENFFILICPVCDRSHCMPYSNKMQLPENYLHGRLTKRYMQEHGYLKWRFDRSSGPILCQVCRNKRIAYKRCITCRLNLCNDCLKAFHSDVAMQDHVFVDTSAEEQDEKICIHHPSSRIIEYCRNDNKLLCTFCKFSFHNGHDTISLIDACSERAASLFSAIAKFKAVRYEIDNDLMEFNILKNSFKADKEAKRKEIRNGFLKLRSILQEKEKIIMEQIENLEVSRQKEIEKYVYVTTMKVNEMDGLIAYSKEALKETGQVAFLQSAKILVDQIEDGIQTTYRPDPQLRLHSINYVPLDFVELSSAIHELFPTGPKKVRSSGDSLPSPYPVHSETMIARKVTFSTHSLGNQHIYQRSSSMLSFSNTDKKAKVGLEACGRAQSATPAKPTDGLYTYWSAGADSQSVQNSSSFHNWYSFNDGSVKTPGPIVIYQTLVYPRAAKVYWTCPAEDVDSFEMEFYEVITSPPNNVQMELCGQIRDIMQQNLELHNLTPNTEYVFKVRAINDNGPGQWSDICKVVTPDGHGKNRAKWGLLKNIQSALQKHF.

The RING-type zinc-finger motif lies at 146 to 192 (CPMCSRLRLHSFMLPCNHSLCEKCLRQLQKHAEVTENFFILICPVCD). B box-type zinc fingers lie at residues 235-280 (PILC…FVDT) and 285-326 (QDEK…TISL). Zn(2+) contacts are provided by C290, H293, C313, and H318. Positions 382-407 (KLRSILQEKEKIIMEQIENLEVSRQK) form a coiled coil. The COS domain maps to 434 to 492 (LKETGQVAFLQSAKILVDQIEDGIQTTYRPDPQLRLHSINYVPLDFVELSSAIHELFPT). The region spanning 603–701 (TPGPIVIYQT…DICKVVTPDG (99 aa)) is the Fibronectin type-III domain.

It belongs to the TRIM/RBCC family.

The chain is Tripartite motif-containing protein 42 (TRIM42) from Homo sapiens (Human).